Reading from the N-terminus, the 262-residue chain is Small ribosomal subunit protein eS1 (262 aa).

The protein belongs to the eukaryotic ribosomal protein eS1 family. In terms of assembly, component of the small ribosomal subunit. Mature ribosomes consist of a small (40S) and a large (60S) subunit. The 40S subunit contains about 32 different proteins and 1 molecule of RNA (18S). The 60S subunit contains about 42 different proteins and 3 molecules of RNA (28S, 5.8S and 5S).

It localises to the cytoplasm. In terms of biological role, component of the ribosome, a large ribonucleoprotein complex responsible for the synthesis of proteins in the cell. The small ribosomal subunit (SSU) binds messenger RNAs (mRNAs) and translates the encoded message by selecting cognate aminoacyl-transfer RNA (tRNA) molecules. The large subunit (LSU) contains the ribosomal catalytic site termed the peptidyl transferase center (PTC), which catalyzes the formation of peptide bonds, thereby polymerizing the amino acids delivered by tRNAs into a polypeptide chain. The nascent polypeptides leave the ribosome through a tunnel in the LSU and interact with protein factors that function in enzymatic processing, targeting, and the membrane insertion of nascent chains at the exit of the ribosomal tunnel. The sequence is that of Small ribosomal subunit protein eS1 from Plasmodium falciparum (isolate 3D7).